We begin with the raw amino-acid sequence, 328 residues long: Complex I intermediate-associated protein 30, mitochondrial (328 aa).

A mitochondrion-targeting transit peptide spans Met1–Leu24. Residues Val44–Gly54 are compositionally biased toward polar residues. The disordered stretch occupies residues Val44–Glu80. Over residues Lys55 to Ala69 the composition is skewed to basic and acidic residues. A Phosphoserine modification is found at Ser319.

The protein belongs to the CIA30 family. Part of the mitochondrial complex I assembly/MCIA complex that comprises at least the core subunits TMEM126B, NDUFAF1, ECSIT and ACAD9 and complement subunits such as COA1 and TMEM186. Interacts with ECSIT. Interacts with ACAD9. At early stages of complex I assembly, it is found in intermediate subcomplexes that contain different subunits including NDUFB6, NDUFA6, NDUFA9, NDUFS3, NDUFS7, ND1, ND2 and ND3. Interacts with TMEM70 and TMEM242.

The protein localises to the mitochondrion. Its subcellular location is the mitochondrion matrix. Functionally, as part of the MCIA complex, involved in the assembly of the mitochondrial complex I. This chain is Complex I intermediate-associated protein 30, mitochondrial, found in Mus musculus (Mouse).